Here is an 85-residue protein sequence, read N- to C-terminus: Small ribosomal subunit protein uS17 (85 aa).

Belongs to the universal ribosomal protein uS17 family. As to quaternary structure, part of the 30S ribosomal subunit.

In terms of biological role, one of the primary rRNA binding proteins, it binds specifically to the 5'-end of 16S ribosomal RNA. This is Small ribosomal subunit protein uS17 from Lachnospira eligens (strain ATCC 27750 / DSM 3376 / VPI C15-48 / C15-B4) (Eubacterium eligens).